Consider the following 65-residue polypeptide: MRIVYLLLPFILLLAQGAAGSSQALGRKSDCFRKNGFCAFLKCPYLTLISGKCSRFHLCCKRIWG.

Residues 1–19 (MRIVYLLLPFILLLAQGAA) form the signal peptide. Residues 20-25 (GSSQAL) constitute a propeptide that is removed on maturation. 3 cysteine pairs are disulfide-bonded: cysteine 31/cysteine 59, cysteine 38/cysteine 53, and cysteine 43/cysteine 60.

The protein belongs to the beta-defensin family.

It is found in the secreted. Its subcellular location is the cytoplasmic granule. Functionally, has bactericidal activity. Potent activity against E.coli ML-35, L.monocytogenes EGD and C.albicans. The protein is Gallinacin-1 alpha of Gallus gallus (Chicken).